The sequence spans 371 residues: Queuine tRNA-ribosyltransferase (371 aa).

The active-site Proton acceptor is Asp-90. Substrate is bound by residues 90–94 (DSGGF), Asp-144, Gln-188, and Gly-215. The RNA binding stretch occupies residues 246 to 252 (GVGTPED). Asp-265 serves as the catalytic Nucleophile. The RNA binding; important for wobble base 34 recognition stretch occupies residues 270 to 274 (TRNAR). Residues Cys-303, Cys-305, Cys-308, and His-334 each coordinate Zn(2+).

The protein belongs to the queuine tRNA-ribosyltransferase family. Homodimer. Within each dimer, one monomer is responsible for RNA recognition and catalysis, while the other monomer binds to the replacement base PreQ1. It depends on Zn(2+) as a cofactor.

It carries out the reaction 7-aminomethyl-7-carbaguanine + guanosine(34) in tRNA = 7-aminomethyl-7-carbaguanosine(34) in tRNA + guanine. It functions in the pathway tRNA modification; tRNA-queuosine biosynthesis. Functionally, catalyzes the base-exchange of a guanine (G) residue with the queuine precursor 7-aminomethyl-7-deazaguanine (PreQ1) at position 34 (anticodon wobble position) in tRNAs with GU(N) anticodons (tRNA-Asp, -Asn, -His and -Tyr). Catalysis occurs through a double-displacement mechanism. The nucleophile active site attacks the C1' of nucleotide 34 to detach the guanine base from the RNA, forming a covalent enzyme-RNA intermediate. The proton acceptor active site deprotonates the incoming PreQ1, allowing a nucleophilic attack on the C1' of the ribose to form the product. After dissociation, two additional enzymatic reactions on the tRNA convert PreQ1 to queuine (Q), resulting in the hypermodified nucleoside queuosine (7-(((4,5-cis-dihydroxy-2-cyclopenten-1-yl)amino)methyl)-7-deazaguanosine). The chain is Queuine tRNA-ribosyltransferase from Chromobacterium violaceum (strain ATCC 12472 / DSM 30191 / JCM 1249 / CCUG 213 / NBRC 12614 / NCIMB 9131 / NCTC 9757 / MK).